The sequence spans 192 residues: UPF0312 protein Pput_4854 (192 aa).

Positions 1–23 (MLKKTFAALALGTALLSAGQAMA) are cleaved as a signal peptide.

It belongs to the UPF0312 family. Type 1 subfamily.

It is found in the periplasm. In Pseudomonas putida (strain ATCC 700007 / DSM 6899 / JCM 31910 / BCRC 17059 / LMG 24140 / F1), this protein is UPF0312 protein Pput_4854.